A 114-amino-acid chain; its full sequence is Small ribosomal subunit protein bS6 (114 aa).

Belongs to the bacterial ribosomal protein bS6 family.

Binds together with bS18 to 16S ribosomal RNA. In Bacteroides fragilis (strain YCH46), this protein is Small ribosomal subunit protein bS6.